Consider the following 149-residue polypeptide: Transcriptional repressor NrdR (149 aa).

Residues 3-34 (CPFCGTQDTKVIDSRLVADGASVRRRRECNHC) fold into a zinc finger. The ATP-cone domain maps to 49–139 (PRVIKTDGSR…VYRSFEDIRE (91 aa)).

Belongs to the NrdR family. Zn(2+) serves as cofactor.

Functionally, negatively regulates transcription of bacterial ribonucleotide reductase nrd genes and operons by binding to NrdR-boxes. This chain is Transcriptional repressor NrdR, found in Idiomarina loihiensis (strain ATCC BAA-735 / DSM 15497 / L2-TR).